The sequence spans 332 residues: GTP 3',8-cyclase (332 aa).

The 215-residue stretch at 7-221 (QYERLHDYVR…FDLCKQAGLD (215 aa)) folds into the Radical SAM core domain. Arginine 16 contacts GTP. [4Fe-4S] cluster-binding residues include cysteine 23 and cysteine 27. S-adenosyl-L-methionine is bound at residue tyrosine 29. A [4Fe-4S] cluster-binding site is contributed by cysteine 30. Arginine 66 serves as a coordination point for GTP. Glycine 70 contacts S-adenosyl-L-methionine. Threonine 97 is a GTP binding site. Residue serine 121 coordinates S-adenosyl-L-methionine. GTP is bound at residue lysine 158. Methionine 192 provides a ligand contact to S-adenosyl-L-methionine. Residues cysteine 256 and cysteine 259 each contribute to the [4Fe-4S] cluster site. A GTP-binding site is contributed by 261–263 (RLR). Position 273 (cysteine 273) interacts with [4Fe-4S] cluster.

Belongs to the radical SAM superfamily. MoaA family. As to quaternary structure, monomer and homodimer. It depends on [4Fe-4S] cluster as a cofactor.

The catalysed reaction is GTP + AH2 + S-adenosyl-L-methionine = (8S)-3',8-cyclo-7,8-dihydroguanosine 5'-triphosphate + 5'-deoxyadenosine + L-methionine + A + H(+). The protein operates within cofactor biosynthesis; molybdopterin biosynthesis. In terms of biological role, catalyzes the cyclization of GTP to (8S)-3',8-cyclo-7,8-dihydroguanosine 5'-triphosphate. The sequence is that of GTP 3',8-cyclase from Limosilactobacillus fermentum (strain NBRC 3956 / LMG 18251) (Lactobacillus fermentum).